We begin with the raw amino-acid sequence, 338 residues long: Lipoate-protein ligase A (338 aa).

Residues 29–216 (PATQRVLFLW…AFFAHYGERV (188 aa)) enclose the BPL/LPL catalytic domain. ATP is bound by residues R71, 76–79 (GAVF), and K134. K134 provides a ligand contact to (R)-lipoate.

It belongs to the LplA family. Monomer.

The protein resides in the cytoplasm. It catalyses the reaction L-lysyl-[lipoyl-carrier protein] + (R)-lipoate + ATP = N(6)-[(R)-lipoyl]-L-lysyl-[lipoyl-carrier protein] + AMP + diphosphate + H(+). Its pathway is protein modification; protein lipoylation via exogenous pathway; protein N(6)-(lipoyl)lysine from lipoate: step 1/2. It functions in the pathway protein modification; protein lipoylation via exogenous pathway; protein N(6)-(lipoyl)lysine from lipoate: step 2/2. Catalyzes both the ATP-dependent activation of exogenously supplied lipoate to lipoyl-AMP and the transfer of the activated lipoyl onto the lipoyl domains of lipoate-dependent enzymes. The chain is Lipoate-protein ligase A from Escherichia coli O9:H4 (strain HS).